Consider the following 29-residue polypeptide: Cyclotide mden-C (29 aa).

Residues 1–29 constitute a cross-link (cyclopeptide (Gly-Asn)); the sequence is GKPICGETCFKGKCYTPGCTCSYPVCKKN. Disulfide bonds link Cys5/Cys19, Cys9/Cys21, and Cys14/Cys26.

The protein belongs to the cyclotide family. In terms of processing, this is a cyclic peptide.

Probably participates in a plant defense mechanism. The polypeptide is Cyclotide mden-C (Melicytus dentatus (Tree violet)).